The sequence spans 420 residues: Serine--tRNA ligase (420 aa).

229-231 (TAE) contributes to the L-serine binding site. 260-262 (RAE) provides a ligand contact to ATP. E283 contributes to the L-serine binding site. 347–350 (EISS) contributes to the ATP binding site. L-serine is bound at residue S382.

This sequence belongs to the class-II aminoacyl-tRNA synthetase family. Type-1 seryl-tRNA synthetase subfamily. As to quaternary structure, homodimer. The tRNA molecule binds across the dimer.

The protein resides in the cytoplasm. The catalysed reaction is tRNA(Ser) + L-serine + ATP = L-seryl-tRNA(Ser) + AMP + diphosphate + H(+). It catalyses the reaction tRNA(Sec) + L-serine + ATP = L-seryl-tRNA(Sec) + AMP + diphosphate + H(+). It functions in the pathway aminoacyl-tRNA biosynthesis; selenocysteinyl-tRNA(Sec) biosynthesis; L-seryl-tRNA(Sec) from L-serine and tRNA(Sec): step 1/1. Functionally, catalyzes the attachment of serine to tRNA(Ser). Is also able to aminoacylate tRNA(Sec) with serine, to form the misacylated tRNA L-seryl-tRNA(Sec), which will be further converted into selenocysteinyl-tRNA(Sec). The sequence is that of Serine--tRNA ligase from Caldicellulosiruptor saccharolyticus (strain ATCC 43494 / DSM 8903 / Tp8T 6331).